The sequence spans 140 residues: Large ribosomal subunit protein uL11 (140 aa).

It belongs to the universal ribosomal protein uL11 family. As to quaternary structure, part of the ribosomal stalk of the 50S ribosomal subunit. Interacts with L10 and the large rRNA to form the base of the stalk. L10 forms an elongated spine to which L12 dimers bind in a sequential fashion forming a multimeric L10(L12)X complex. One or more lysine residues are methylated.

Functionally, forms part of the ribosomal stalk which helps the ribosome interact with GTP-bound translation factors. The polypeptide is Large ribosomal subunit protein uL11 (Desulfatibacillum aliphaticivorans).